The chain runs to 199 residues: Outer-membrane lipoprotein LolB (199 aa).

The signal sequence occupies residues 1 to 28 (MSACPAPRSPVRWLHAFTLFLLLAVLAG). Residue cysteine 29 is the site of N-palmitoyl cysteine attachment. Cysteine 29 is lipidated: S-diacylglycerol cysteine.

This sequence belongs to the LolB family. Monomer.

The protein resides in the cell outer membrane. Its function is as follows. Plays a critical role in the incorporation of lipoproteins in the outer membrane after they are released by the LolA protein. The polypeptide is Outer-membrane lipoprotein LolB (Bordetella pertussis (strain Tohama I / ATCC BAA-589 / NCTC 13251)).